Here is a 192-residue protein sequence, read N- to C-terminus: Mediator of RNA polymerase II transcription subunit 29 (192 aa).

The segment at 32–51 (MQQQSPQQMQPAPVPQQTQQ) is disordered.

This sequence belongs to the Mediator complex subunit 29 family. As to quaternary structure, component of the Mediator complex.

Its subcellular location is the nucleus. Component of the Mediator complex, a coactivator involved in the regulated transcription of nearly all RNA polymerase II-dependent genes. Mediator functions as a bridge to convey information from gene-specific regulatory proteins to the basal RNA polymerase II transcription machinery. Mediator is recruited to promoters by direct interactions with regulatory proteins and serves as a scaffold for the assembly of a functional preinitiation complex with RNA polymerase II and the general transcription factors. This is Mediator of RNA polymerase II transcription subunit 29 (ix) from Bombyx mori (Silk moth).